The sequence spans 467 residues: Asparagine--tRNA ligase (467 aa).

It belongs to the class-II aminoacyl-tRNA synthetase family. Homodimer.

Its subcellular location is the cytoplasm. It catalyses the reaction tRNA(Asn) + L-asparagine + ATP = L-asparaginyl-tRNA(Asn) + AMP + diphosphate + H(+). This chain is Asparagine--tRNA ligase, found in Glaesserella parasuis serovar 5 (strain SH0165) (Haemophilus parasuis).